The sequence spans 427 residues: Dihydroorotase (427 aa).

Residues histidine 60 and histidine 62 each coordinate Zn(2+). Substrate is bound by residues 62-64 and asparagine 94; that span reads HLR. Residues aspartate 151, histidine 178, and histidine 231 each contribute to the Zn(2+) site. A substrate-binding site is contributed by asparagine 277. Aspartate 304 is a Zn(2+) binding site. Aspartate 304 is a catalytic residue. Substrate-binding positions include histidine 308 and 322–323; that span reads FG.

This sequence belongs to the metallo-dependent hydrolases superfamily. DHOase family. Class I DHOase subfamily. Zn(2+) serves as cofactor.

It catalyses the reaction (S)-dihydroorotate + H2O = N-carbamoyl-L-aspartate + H(+). Its pathway is pyrimidine metabolism; UMP biosynthesis via de novo pathway; (S)-dihydroorotate from bicarbonate: step 3/3. Catalyzes the reversible cyclization of carbamoyl aspartate to dihydroorotate. The protein is Dihydroorotase of Pelotomaculum thermopropionicum (strain DSM 13744 / JCM 10971 / SI).